The following is a 646-amino-acid chain: Esterase EstA (646 aa).

An N-terminal signal peptide occupies residues 1-24 (MIRMALKPLVAACLLASLSTAPQA). Topologically, residues 25–397 (APSPYSTLVV…DSAASGDGNG (373 aa)) are extracellular. Ser38 (nucleophile) is an active-site residue. Catalysis depends on residues Asp310 and His313. In terms of domain architecture, Autotransporter spans 366-646 (QNVGQWRGFV…SVSLALSLDF (281 aa)). Residues 398–408 (YNLTLGGSYRI) form a beta stranded membrane-spanning segment. Residues 409–410 (DE) are Periplasmic-facing. A beta stranded transmembrane segment spans residues 411–421 (AWRAGVAAGFY). At 422 to 437 (RQKLEAGAKDSDYRMN) the chain is on the extracellular side. Residues 438 to 447 (SYMASAFVQY) traverse the membrane as a beta stranded segment. Over 448-451 (QENR) the chain is Periplasmic. A beta stranded transmembrane segment spans residues 452–461 (WWADAALTGG). At 462-488 (YLDYDDLKRKFALGGGERSEKGDTNGH) the chain is on the extracellular side. A beta stranded transmembrane segment spans residues 489–500 (LWAFSARLGYDI). At 501 to 507 (AQQADSP) the chain is on the periplasmic side. Residues 508–518 (WHLSPFVSADY) form a beta stranded membrane-spanning segment. Over 519 to 547 (ARVEVDGYSEKGASATALDYDDQKRSSKR) the chain is Extracellular. A beta stranded transmembrane segment spans residues 548–558 (LGAGLQGKYAF). Residues 559–561 (GSD) lie on the Periplasmic side of the membrane. Residues 562–571 (TQLFAEYAHE) form a beta stranded membrane-spanning segment. Residues 572–605 (REYEDDTQDLTMSLNSLPGNRFTLEGYTPQDHLN) lie on the Extracellular side of the membrane. The chain crosses the membrane as a beta stranded span at residues 606 to 615 (RVSLGFSQKL). Residues 616 to 618 (APE) are Periplasmic-facing. The chain crosses the membrane as a beta stranded span at residues 619–628 (LSLRGGYNWR). Residues 629–636 (KGEDDTQQ) lie on the Extracellular side of the membrane. A beta stranded membrane pass occupies residues 637-646 (SVSLALSLDF).

It belongs to the 'GDSL' lipolytic enzyme family.

The protein localises to the cell outer membrane. The enzyme catalyses a carboxylic ester + H2O = an alcohol + a carboxylate + H(+). In terms of biological role, esterase whose enzymatic activity is required for rhamnolipid production, all kinds of cell motility (swimming, swarming, and twitching), and biofilm formation; the exact role of EstA in these processes is unclear. In vitro, has pronounced esterase activities towards p-nitrophenyl esters of short acyl chain length (C4-C6) and Tween detergents. Also shows relatively high activity towards beta-naphthyl butyrate, whereas its activities towards triacylglycerols and acyls-CoA are negligible. In Pseudomonas aeruginosa (strain ATCC 15692 / DSM 22644 / CIP 104116 / JCM 14847 / LMG 12228 / 1C / PRS 101 / PAO1), this protein is Esterase EstA (estA).